The primary structure comprises 475 residues: Argininosuccinate lyase 1 (475 aa).

This sequence belongs to the lyase 1 family. Argininosuccinate lyase subfamily.

The protein localises to the cytoplasm. The enzyme catalyses 2-(N(omega)-L-arginino)succinate = fumarate + L-arginine. It participates in amino-acid biosynthesis; L-arginine biosynthesis; L-arginine from L-ornithine and carbamoyl phosphate: step 3/3. The sequence is that of Argininosuccinate lyase 1 from Pseudomonas fluorescens (strain Pf0-1).